Consider the following 210-residue polypeptide: Oligoribonuclease (210 aa).

The Exonuclease domain occupies 12–177; the sequence is LVWIDLEMTG…ADIVESIREL (166 aa). Tyrosine 134 is a catalytic residue.

This sequence belongs to the oligoribonuclease family.

Its subcellular location is the cytoplasm. Functionally, 3'-to-5' exoribonuclease specific for small oligoribonucleotides. The chain is Oligoribonuclease from Corynebacterium diphtheriae (strain ATCC 700971 / NCTC 13129 / Biotype gravis).